A 178-amino-acid chain; its full sequence is Large ribosomal subunit protein uL6 (178 aa).

Belongs to the universal ribosomal protein uL6 family. Part of the 50S ribosomal subunit.

In terms of biological role, this protein binds to the 23S rRNA, and is important in its secondary structure. It is located near the subunit interface in the base of the L7/L12 stalk, and near the tRNA binding site of the peptidyltransferase center. The sequence is that of Large ribosomal subunit protein uL6 from Helicobacter pylori (strain G27).